We begin with the raw amino-acid sequence, 248 residues long: Mannose-binding protein C (248 aa).

The signal sequence occupies residues 1–20 (MSLFPSLPLLLLSVVATSYS). Positions 42 to 99 (GINGFPGKDGRDGTKGEKGEPGQGLRGLQGPPGKLGPPGNPGPSGSPGPKGQKGDPGE) constitute a Collagen-like domain. The disordered stretch occupies residues 43–111 (INGFPGKDGR…DCDSSLAASE (69 aa)). Residue P47 is modified to 4-hydroxyproline. Residues 49-61 (KDGRDGTKGEKGE) show a composition bias toward basic and acidic residues. Residues P73, P79, P82, and P88 each carry the 4-hydroxyproline modification. Residues 75 to 87 (KLGPPGNPGPSGS) are compositionally biased toward pro residues. Residues 112-130 (RKALQTEMAHIKKWLTFSL) adopt a coiled-coil conformation. Residues 134–245 (VGNKFFLTNG…CSSSHLALCE (112 aa)) form the C-type lectin domain. Disulfide bonds link C155-C244 and C222-C236.

Oligomeric complex of 3 or more homotrimers. Interacts with MASP1 and MASP2. Interacts with MEP1A and MEP1B and may inhibit their catalytic activity. Post-translationally, hydroxylation on proline residues within the sequence motif, GXPG, is most likely to be 4-hydroxy as this fits the requirement for 4-hydroxylation in vertebrates.

Its subcellular location is the secreted. Functionally, calcium-dependent lectin involved in innate immune defense. Binds mannose, fucose and N-acetylglucosamine on different microorganisms and activates the lectin complement pathway. Binds to late apoptotic cells, as well as to apoptotic blebs and to necrotic cells, but not to early apoptotic cells, facilitating their uptake by macrophages. The chain is Mannose-binding protein C (MBL2) from Trachypithecus obscurus (Dusky leaf-monkey).